A 451-amino-acid chain; its full sequence is MSDFFHSDVLSVSELNAFAKSILENHLAGLWIAGEVSNLTRAASGHYYFSLKDSRAQVRCAMFKGAAARLAQPLKEGDHIEVAGKISIYEARGEFQITVNEVRLKGLGQLYEAYERLKAQLQAEGAFAAERKKPLPVRPQCIGIVTSLAAAALRDVVTTLKRRAPEIPVIVYPAAVQGAGSGFQIAQAIKTASQRAECDVLIVCRGGGSIEDLRAFNEEPVVRAIEACTIPVVSGVGHETDFTLADFVADVRAPTPTGAAELVSPNRQESLHRLVQAQGRLKTVLEQRYFDASQKLDWLARQIRHPRQKLDEQRASIGKLAQTLSYSMTQNLRAHTARFERQTQALQHCRPDVSVYRQDIVRLQTALPAAFSRLLARRRQSLTAQAALLEAVSPQHILERGFSVVKNTRGQVIRNADVLKQGQKLHITFSDGETDVRVSKEQGQQDLFDCI.

Belongs to the XseA family. In terms of assembly, heterooligomer composed of large and small subunits.

The protein resides in the cytoplasm. The enzyme catalyses Exonucleolytic cleavage in either 5'- to 3'- or 3'- to 5'-direction to yield nucleoside 5'-phosphates.. Bidirectionally degrades single-stranded DNA into large acid-insoluble oligonucleotides, which are then degraded further into small acid-soluble oligonucleotides. The sequence is that of Exodeoxyribonuclease 7 large subunit from Neisseria gonorrhoeae (strain ATCC 700825 / FA 1090).